The sequence spans 791 residues: FHF complex subunit HOOK-interacting protein 1B (791 aa).

Disordered regions lie at residues 465-510 and 524-556; these read APSP…VPRP and SLGG…SPAE. Phosphoserine is present on Ser-467. The segment covering 496–510 has biased composition (low complexity); sequence SPSVDSSSVVTVPRP. Phosphoserine is present on residues Ser-524, Ser-537, Ser-543, Ser-547, and Ser-679. Residues 541 to 552 show a composition bias toward low complexity; sequence TASPTSSPGRRP. Position 708 is a phosphothreonine (Thr-708). Ser-716 is modified (phosphoserine).

Belongs to the FHIP family. As to quaternary structure, component of the FTS/Hook/FHIP complex (FHF complex), composed of AKTIP/FTS, FHIP1B, and one or more members of the Hook family of proteins HOOK1, HOOK2, and HOOK3. The FHF complex associates with the homotypic vesicular sorting complex (the HOPS complex).

In terms of biological role, component of the FTS/Hook/FHIP complex (FHF complex). The FHF complex may function to promote vesicle trafficking and/or fusion via the homotypic vesicular protein sorting complex (the HOPS complex). FHF complex promotes the distribution of AP-4 complex to the perinuclear area of the cell. The polypeptide is FHF complex subunit HOOK-interacting protein 1B (Fhip1b) (Rattus norvegicus (Rat)).